Consider the following 396-residue polypeptide: NDP-glycosyltransferase YjiC (396 aa).

UDP-binding positions include Asn-18, Thr-234, Val-283, His-298, and 302-306 (NSTME).

It belongs to the UDP-glycosyltransferase family.

It catalyses the reaction an NDP-glycose + an acceptor = a glycosylated acceptor + NDP.. Glycosyltransferase that can glycosylate a wide range of substrates, including various flavonoids (flavones, flavonols, flavanones, flavanols, chalcones), isoflavonoids and stilbenes, to produce multiple glycosylated products. It can accept diverse nucleotide diphosphate-D/L-sugars as donors, including ADP-, GDP-, CDP-, TDP- or UDP-alpha-D-glucose, and catalyzes O-, N-, or S-glycosylation. In vitro, catalyzes the glycosylation of, among others, apigenin, 3-hydroxyflavone, phloretin or resveratrol, resulting in multiple glucosylated products, along with mono-, di-, tri- and tetraglucosides. Can also catalyze the glycosylation of the macrolide epothilone A with diverse NDP-D/L-sugars, forming different epothilone A glycoside derivatives. This Bacillus licheniformis (strain ATCC 14580 / DSM 13 / JCM 2505 / CCUG 7422 / NBRC 12200 / NCIMB 9375 / NCTC 10341 / NRRL NRS-1264 / Gibson 46) protein is NDP-glycosyltransferase YjiC.